A 339-amino-acid chain; its full sequence is MKLAVIGGDGIGPEVTAEALKVLRAVRQDVEVTDYDLGARRYLRNGELLSDADFASLREHDAILLGAIGAPGEVPPGVLERGLLLKMRFALDHHVNLRPSKLYPTSTSPLANPGDIDFVVVREGTEGLYCGNGGTLREGTEHEVASEVSQNTRFGVERVVRDAFQRAMGRRKHVTLVHKTNVLVNAGGLWQRTVNEVAQEFPEVTVDYNHIDAATIYMVTDPARYDVIVTDNLFGDILTDLAGAVTGGIGLAASGNIDASGANPSMFEPVHGSAPDIAGKGIADPTAAILSAAMLLRHLGDEENAVRIEEAVAADVSARGDAQARTTEIGDRIAAALSA.

Substrate is bound by residues Arg-88, Arg-98, Arg-122, and Asp-212. Residues Asp-212, Asp-236, and Asp-240 each coordinate Mg(2+). 272-284 lines the NAD(+) pocket; that stretch reads GSAPDIAGKGIAD.

Belongs to the isocitrate and isopropylmalate dehydrogenases family. LeuB type 2 subfamily. As to quaternary structure, homodimer. The cofactor is Mg(2+). Mn(2+) is required as a cofactor.

It localises to the cytoplasm. It catalyses the reaction (2R,3S)-3-isopropylmalate + NAD(+) = 4-methyl-2-oxopentanoate + CO2 + NADH. Its pathway is amino-acid biosynthesis; L-leucine biosynthesis; L-leucine from 3-methyl-2-oxobutanoate: step 3/4. Its function is as follows. Catalyzes the oxidation of 3-carboxy-2-hydroxy-4-methylpentanoate (3-isopropylmalate) to 3-carboxy-4-methyl-2-oxopentanoate. The product decarboxylates to 4-methyl-2 oxopentanoate. In Corynebacterium aurimucosum (strain ATCC 700975 / DSM 44827 / CIP 107346 / CN-1) (Corynebacterium nigricans), this protein is 3-isopropylmalate dehydrogenase.